We begin with the raw amino-acid sequence, 566 residues long: Arginine--tRNA ligase (566 aa).

The short motif at 121–131 is the 'HIGH' region element; it reads ANPNGPFHIGH.

Belongs to the class-I aminoacyl-tRNA synthetase family.

The protein localises to the cytoplasm. It carries out the reaction tRNA(Arg) + L-arginine + ATP = L-arginyl-tRNA(Arg) + AMP + diphosphate. This chain is Arginine--tRNA ligase, found in Methanococcus maripaludis (strain C6 / ATCC BAA-1332).